Reading from the N-terminus, the 105-residue chain is Met repressor (105 aa).

Belongs to the MetJ family. In terms of assembly, homodimer.

It is found in the cytoplasm. Its function is as follows. This regulatory protein, when combined with SAM (S-adenosylmethionine) represses the expression of the methionine regulon and of enzymes involved in SAM synthesis. The protein is Met repressor of Vibrio cholerae serotype O1 (strain ATCC 39541 / Classical Ogawa 395 / O395).